The following is a 218-amino-acid chain: Translation initiation factor 6 (218 aa).

Belongs to the eIF-6 family.

Its function is as follows. Binds to the 50S ribosomal subunit and prevents its association with the 30S ribosomal subunit to form the 70S initiation complex. This is Translation initiation factor 6 from Methanosarcina acetivorans (strain ATCC 35395 / DSM 2834 / JCM 12185 / C2A).